The chain runs to 178 residues: Cysteine-rich venom protein VAR3 (178 aa).

Positions 1-22 are cleaved as a signal peptide; the sequence is MILLKLYLTLAAILCQSRGTTS. The SCP domain maps to 41–169; the sequence is NKHNDLRRTV…PLKYFLVCQY (129 aa). 3 disulfide bridges follow: C77–C156, C95–C170, and C151–C167.

The protein belongs to the CRISP family. Post-translationally, contains 8 disulfide bonds. As to expression, expressed by the venom gland.

Its subcellular location is the secreted. Its function is as follows. Blocks ryanodine receptors, and potassium channels. The sequence is that of Cysteine-rich venom protein VAR3 from Varanus acanthurus (Ridge-tailed monitor).